The chain runs to 130 residues: Con-Ins G2b (130 aa).

Positions 1-23 (MTTSSYFLLVALGLLLYVRQSFS) are cleaved as a signal peptide. 4 cysteine pairs are disulfide-bonded: Cys-29–Cys-100, Cys-41–Cys-103, Cys-53–Cys-116, and Cys-102–Cys-107. Pro-34 bears the 4-hydroxyproline; partial mark. Residues 54-77 (EEEEARRGGTNDGGKKRRRASPLR) are disordered. A propeptide spans 59–92 (RRGGTNDGGKKRRRASPLRKRRRFISMLKARAKR) (c peptide). Residues 68–77 (KKRRRASPLR) are compositionally biased toward basic residues. Glu-111 carries the post-translational modification 4-carboxyglutamate; partial.

Belongs to the insulin family. As to quaternary structure, heterodimer of A and B chains; disulfide-linked. Expressed by the venom gland.

It localises to the secreted. In terms of biological role, this venom insulin, from a fish-hunting cone snail, facilitates prey capture by rapidly inducing hypoglycemic shock. Intraperitoneal injection of this peptide into zebrafish lowers blood glucose with the same potency than human insulin. In vivo, when applied to water, this peptide reduces overall locomotor activity of zebrafish larvae, observed as a significant decrease in the percentage of time spent swimming and movement frequency. The chain is Con-Ins G2b from Conus geographus (Geography cone).